A 104-amino-acid polypeptide reads, in one-letter code: UPF0125 protein PSPTO_4512 (104 aa).

The protein belongs to the UPF0125 (RnfH) family.

This Pseudomonas syringae pv. tomato (strain ATCC BAA-871 / DC3000) protein is UPF0125 protein PSPTO_4512.